We begin with the raw amino-acid sequence, 366 residues long: Ribosomal RNA large subunit methyltransferase M (366 aa).

Residues S188, 221–224 (CPGG), D240, D260, and D277 each bind S-adenosyl-L-methionine. Residue K306 is the Proton acceptor of the active site.

The protein belongs to the class I-like SAM-binding methyltransferase superfamily. RNA methyltransferase RlmE family. RlmM subfamily. In terms of assembly, monomer.

It is found in the cytoplasm. The enzyme catalyses cytidine(2498) in 23S rRNA + S-adenosyl-L-methionine = 2'-O-methylcytidine(2498) in 23S rRNA + S-adenosyl-L-homocysteine + H(+). Functionally, catalyzes the 2'-O-methylation at nucleotide C2498 in 23S rRNA. This Salmonella paratyphi C (strain RKS4594) protein is Ribosomal RNA large subunit methyltransferase M.